A 431-amino-acid polypeptide reads, in one-letter code: Nocturnin (431 aa).

The transit peptide at 1–75 (MFHSPRRLCS…SMGTGTSRLY (75 aa)) directs the protein to the mitochondrion. Over residues 20-31 (LRRLPAPGLRRP) the composition is skewed to low complexity. Residues 20–41 (LRRLPAPGLRRPLSPPAAVPRP) are disordered. Positions 32–41 (LSPPAAVPRP) are enriched in pro residues. E195 lines the Mg(2+) pocket. Residues E195, 219-221 (KPW), N263, 286-289 (HLKA), and 324-326 (DFN) contribute to the substrate site. The segment at 343–353 (NLNSAYKLLSA) is interaction with PPARG. H414 is a binding site for substrate.

Belongs to the CCR4/nocturin family. In terms of assembly, interacts with PPARG. It depends on Mg(2+) as a cofactor. In terms of tissue distribution, adipose tissue. Expression is higher in subcutaneous adipose tissue as compared to visceral adipose tissue.

The protein localises to the cytoplasm. Its subcellular location is the nucleus. It localises to the perinuclear region. The protein resides in the mitochondrion. The catalysed reaction is NADP(+) + H2O = phosphate + NAD(+). The enzyme catalyses NADPH + H2O = phosphate + NADH. Functionally, phosphatase which catalyzes the conversion of NADP(+) to NAD(+) and of NADPH to NADH. Shows a small preference for NADPH over NADP(+). Represses translation and promotes degradation of target mRNA molecules. Plays an important role in post-transcriptional regulation of metabolic genes under circadian control. Exerts a rhythmic post-transcriptional control of genes necessary for metabolic functions including nutrient absorption, glucose/insulin sensitivity, lipid metabolism, adipogenesis, inflammation and osteogenesis. Plays an important role in favoring adipogenesis over osteoblastogenesis and acts as a key regulator of the adipogenesis/osteogenesis balance. Promotes adipogenesis by facilitating PPARG nuclear translocation which activates its transcriptional activity. Regulates circadian expression of NOS2 in the liver and negatively regulates the circadian expression of IGF1 in the bone. Critical for proper development of early embryos. This is Nocturnin from Homo sapiens (Human).